Consider the following 108-residue polypeptide: UPF0060 membrane protein DSY4157 (108 aa).

A run of 4 helical transmembrane segments spans residues 6 to 26, 31 to 51, 60 to 80, and 86 to 106; these read ILFI…WLWL, PYWY…IPTL, VYAA…WGVD, and TYDW…LWAP.

It belongs to the UPF0060 family.

The protein resides in the cell membrane. This is UPF0060 membrane protein DSY4157 from Desulfitobacterium hafniense (strain Y51).